Here is a 118-residue protein sequence, read N- to C-terminus: Beta-2-microglobulin (118 aa).

A signal peptide spans 1–20 (MARFVALVLLGLLSLSGLDA). The Ig-like C1-type domain occupies 25–112 (PKIQVYSRHP…HVTLEQPRIV (88 aa)). C45 and C99 are disulfide-bonded.

The protein belongs to the beta-2-microglobulin family. As to quaternary structure, heterodimer of an alpha chain and a beta chain. Beta-2-microglobulin is the beta-chain of major histocompatibility complex class I molecules. Forms a heterotrimer with MR1 and a metabolite antigen.

Its subcellular location is the secreted. Its function is as follows. Component of the class I major histocompatibility complex (MHC). Involved in the presentation of peptide antigens to the immune system. The chain is Beta-2-microglobulin (B2M) from Bos taurus (Bovine).